The chain runs to 792 residues: Serine/threonine-protein kinase Nek4 (792 aa).

In terms of domain architecture, Protein kinase spans Tyr6–Ile261. Residues Val12–Val20 and Lys35 contribute to the ATP site. Asp131 acts as the Proton acceptor in catalysis. The residue at position 165 (Thr165) is a Phosphothreonine; by autocatalysis. 4 disordered regions span residues Gln329–Glu358, Ala379–Tyr515, Gln527–Gln611, and Leu628–Met657. Residues Ser340 and Ser343 each carry the phosphoserine modification. 5 stretches are compositionally biased toward polar residues: residues Gln412–Pro421, Asp456–Ser467, Gln473–Ser484, Ala496–Gln505, and Val541–Ser551. At Lys566 the chain carries N6-methyllysine. Polar residues predominate over residues Arg602 to Gln611. A compositionally biased stretch (basic and acidic residues) spans Asp641 to Met657. The residue at position 675 (Ser675) is a Phosphoserine.

The protein belongs to the protein kinase superfamily. NEK Ser/Thr protein kinase family. NIMA subfamily. It depends on Mn(2+) as a cofactor. In terms of tissue distribution, expressed ubiquitously among various organs and is up-regulated in the testis.

Its subcellular location is the cytoplasm. The protein resides in the cell projection. It is found in the cilium. The catalysed reaction is L-seryl-[protein] + ATP = O-phospho-L-seryl-[protein] + ADP + H(+). It carries out the reaction L-threonyl-[protein] + ATP = O-phospho-L-threonyl-[protein] + ADP + H(+). Required for normal entry into proliferative arrest after a limited number of cell divisions, also called replicative senescence. Required for normal cell cycle arrest in response to double-stranded DNA damage. Protein kinase that seems to act exclusively upon threonine residues. The chain is Serine/threonine-protein kinase Nek4 (Nek4) from Mus musculus (Mouse).